Reading from the N-terminus, the 349-residue chain is MARFSVCGGDDGEGPSNNNHQSRKRQRLPSIDENEEDAETSDAGSSGEEDEDETQNQGMRPESEDRGSTSDDSDREVVIEERRFGKFVNSQSSSSSKDSPLSVTLLDPDVLDCPICCEPLKIPIFQCDNGHLACTLCCTKVRNRCPSCTLPIGYVRCRAMEKVIEASRVSCLNAKYGCKESTSYGNRFSHEQVCVFTPCSCPILDCHYTGYYKDLNNHVRAEHKDDLISFVWNTRLTISLDLNKKTTILQEENDGHVIVVQVFRALHAVYVSVSCIAPLTPGVGRLSCRLAKITVDSLLKQGFMVKNIQKVTNEHPEDGFMLIPSYLFSGNDNLNLQIWIGHGRIFVHS.

A disordered region spans residues 1–77; the sequence is MARFSVCGGD…STSDDSDREV (77 aa). The RING-type; degenerate zinc-finger motif lies at 113 to 149; it reads CPICCEPLKIPIFQCDNGHLACTLCCTKVRNRCPSCT. The tract at residues 163–344 is SBD; it reads VIEASRVSCL…NLQIWIGHGR (182 aa). The SIAH-type zinc finger occupies 166–224; the sequence is ASRVSCLNAKYGCKESTSYGNRFSHEQVCVFTPCSCPILDCHYTGYYKDLNNHVRAEHK. Zn(2+) contacts are provided by Cys-171, Cys-178, His-190, Cys-194, Cys-201, Cys-206, His-218, and His-223.

It belongs to the SINA (Seven in absentia) family.

The enzyme catalyses S-ubiquitinyl-[E2 ubiquitin-conjugating enzyme]-L-cysteine + [acceptor protein]-L-lysine = [E2 ubiquitin-conjugating enzyme]-L-cysteine + N(6)-ubiquitinyl-[acceptor protein]-L-lysine.. It participates in protein modification; protein ubiquitination. In terms of biological role, E3 ubiquitin-protein ligase that mediates ubiquitination and subsequent proteasomal degradation of target proteins. E3 ubiquitin ligases accept ubiquitin from an E2 ubiquitin-conjugating enzyme in the form of a thioester and then directly transfers the ubiquitin to targeted substrates. It probably triggers the ubiquitin-mediated degradation of different substrates. This is E3 ubiquitin-protein ligase SINA-like 10 from Arabidopsis thaliana (Mouse-ear cress).